The primary structure comprises 251 residues: Probable transcriptional regulatory protein cbdbA400 (251 aa).

It belongs to the TACO1 family.

Its subcellular location is the cytoplasm. This is Probable transcriptional regulatory protein cbdbA400 from Dehalococcoides mccartyi (strain CBDB1).